The following is a 234-amino-acid chain: Adenosine 5'-phosphosulfate reductase (234 aa).

[4Fe-4S] cluster is bound by residues Cys-120, Cys-121, Cys-203, and Cys-206. Cys-229 serves as the catalytic Nucleophile; cysteine thiosulfonate intermediate.

It belongs to the PAPS reductase family. CysH subfamily. It depends on [4Fe-4S] cluster as a cofactor.

The protein resides in the cytoplasm. The catalysed reaction is [thioredoxin]-disulfide + sulfite + AMP + 2 H(+) = adenosine 5'-phosphosulfate + [thioredoxin]-dithiol. The protein operates within sulfur metabolism; hydrogen sulfide biosynthesis; sulfite from sulfate. In terms of biological role, catalyzes the formation of sulfite from adenosine 5'-phosphosulfate (APS) using thioredoxin as an electron donor. The protein is Adenosine 5'-phosphosulfate reductase of Bacillus mycoides (strain KBAB4) (Bacillus weihenstephanensis).